Consider the following 261-residue polypeptide: Spermatogenesis-associated protein 46 (261 aa).

A disordered region spans residues 140 to 159 (SSSSSPENTCPREATKKSRH).

As to expression, testis-specific.

Its subcellular location is the nucleus membrane. In terms of biological role, plays a role in spermiogenesis and fertilization. The chain is Spermatogenesis-associated protein 46 from Homo sapiens (Human).